We begin with the raw amino-acid sequence, 226 residues long: Cytidylate kinase (226 aa).

ATP is bound at residue 10–18 (GPASSGKST).

Belongs to the cytidylate kinase family. Type 1 subfamily.

The protein resides in the cytoplasm. The enzyme catalyses CMP + ATP = CDP + ADP. The catalysed reaction is dCMP + ATP = dCDP + ADP. This Streptococcus equi subsp. zooepidemicus (strain MGCS10565) protein is Cytidylate kinase.